The following is a 283-amino-acid chain: MNDSILLGLIGQGLDLSRTPAMHEAEGLAQGRATVYRRIDTLGSRASGQDLKTLLDAALYLGFNGLNITHPYKQAVLPLLDEVSEQATQLGAVNTVVIDATGHTTGHNTDVSGFGRGMEEGLPNAKLDSVVQVGAGGVGNAVAYALVTHGVQKLQVADLDTSRAQALADVINNAVGREAVVGVDARGIEDVIAAADGVVNATPMGMPAHPGTAFDVSCLTKDHWVGDVVYMPIETELLKAARALGCETLDGTRMAIHQAVDAFRLFTGLEPDVSRMRETFLSL.

5 residues coordinate shikimate: serine 17, threonine 69, lysine 73, asparagine 94, and aspartate 110. L-quinate contacts are provided by residues 17–19 (SRT), threonine 69, lysine 73, asparagine 94, and aspartate 110. Residue lysine 73 is the Proton acceptor of the active site. NAD(+)-binding positions include 137–138 (GV), aspartate 158, arginine 163, 203–206 (PMGM), alanine 213, valine 228, and glycine 251. Glutamine 258 provides a ligand contact to shikimate. An L-quinate-binding site is contributed by glutamine 258.

It belongs to the shikimate dehydrogenase family. Homodimer.

It carries out the reaction L-quinate + NAD(+) = 3-dehydroquinate + NADH + H(+). The enzyme catalyses shikimate + NAD(+) = 3-dehydroshikimate + NADH + H(+). The protein operates within metabolic intermediate biosynthesis; chorismate biosynthesis; chorismate from D-erythrose 4-phosphate and phosphoenolpyruvate: step 4/7. It participates in aromatic compound metabolism; 3,4-dihydroxybenzoate biosynthesis; 3-dehydroquinate from D-quinate (NAD(+) route). In terms of biological role, involved in the biosynthesis of the chorismate, which leads to the biosynthesis of aromatic amino acids, and plays a key role in the quinate degradation pathway. Catalyzes the NAD(+)-dependent oxidation of both quinate and shikimate to 3-dehydroquinate and 3-dehydroshikimate, respectively. It can only use NAD. The polypeptide is Quinate/shikimate dehydrogenase (NAD(+)) (Corynebacterium glutamicum (strain ATCC 13032 / DSM 20300 / JCM 1318 / BCRC 11384 / CCUG 27702 / LMG 3730 / NBRC 12168 / NCIMB 10025 / NRRL B-2784 / 534)).